Reading from the N-terminus, the 267-residue chain is Hydroxyethylthiazole kinase (267 aa).

Met51 lines the substrate pocket. Residues Arg127 and Ser173 each coordinate ATP. Ala200 provides a ligand contact to substrate.

The protein belongs to the Thz kinase family. Mg(2+) is required as a cofactor.

The enzyme catalyses 5-(2-hydroxyethyl)-4-methylthiazole + ATP = 4-methyl-5-(2-phosphooxyethyl)-thiazole + ADP + H(+). It functions in the pathway cofactor biosynthesis; thiamine diphosphate biosynthesis; 4-methyl-5-(2-phosphoethyl)-thiazole from 5-(2-hydroxyethyl)-4-methylthiazole: step 1/1. Its function is as follows. Catalyzes the phosphorylation of the hydroxyl group of 4-methyl-5-beta-hydroxyethylthiazole (THZ). This is Hydroxyethylthiazole kinase from Psychromonas ingrahamii (strain DSM 17664 / CCUG 51855 / 37).